Here is a 197-residue protein sequence, read N- to C-terminus: MQQIVLASTSPYRKALLEKLTVPFVCASPDIDETPRIGENAIDLVIRLAESKARALATHYTNHLIIGSDQVCVLGNSITGKPHNKINATRQLQQASGKCVSFFTGLALFNSATQSIQSIAEPFDVYFRTLTEAEIDGYLEKEQPWNCAGSFKSEGLGITLFERLSGRDPNTLIGLPLIALTQMLQKEGLNPLTVRNE.

The Proton acceptor role is filled by aspartate 69.

This sequence belongs to the Maf family. YceF subfamily. A divalent metal cation is required as a cofactor.

The protein localises to the cytoplasm. The enzyme catalyses N(7)-methyl-GTP + H2O = N(7)-methyl-GMP + diphosphate + H(+). Its function is as follows. Nucleoside triphosphate pyrophosphatase that hydrolyzes 7-methyl-GTP (m(7)GTP). May have a dual role in cell division arrest and in preventing the incorporation of modified nucleotides into cellular nucleic acids. The chain is 7-methyl-GTP pyrophosphatase from Pectobacterium atrosepticum (strain SCRI 1043 / ATCC BAA-672) (Erwinia carotovora subsp. atroseptica).